A 147-amino-acid chain; its full sequence is UPF0306 protein YE0465 (147 aa).

It belongs to the UPF0306 family.

This Yersinia enterocolitica serotype O:8 / biotype 1B (strain NCTC 13174 / 8081) protein is UPF0306 protein YE0465.